A 1167-amino-acid polypeptide reads, in one-letter code: PH and Rap-GAP domain-containing protein DDB_G0271806 (1167 aa).

2 PH domains span residues 35–140 (NCVK…SSSL) and 165–257 (HVYL…SRIP). The interval 95–160 (GIDNNNCTNS…TNANTNNGLS (66 aa)) is disordered. The segment covering 98 to 155 (NNNCTNSNSNNNNNNSDLIHLSAPSLSSSTSSTISPISSSSSLTTTTTTTTTTTNANT) has biased composition (low complexity). Disordered stretches follow at residues 335–361 (SGGGSNNSSPSSLQSQQAKESGNGGSL), 376–400 (WRFSSSPSQGRVSIGGGGDRSSTQV), and 645–734 (YSRS…LEPE). The span at 340–351 (NNSSPSSLQSQQ) shows a compositional bias: low complexity. Positions 648 to 676 (SEPNLQSCLSSSPSTRETMVPSSPSSHQL) are enriched in polar residues. Low complexity predominate over residues 687–732 (EQQLSSSSSSSSQQLQLQLQQQEQEQLLQEQPEAEQSQPEPQPQLE). Residues 950 to 1162 (LLSFEERQTT…RTRESLLNYY (213 aa)) form the Rap-GAP domain.

This is PH and Rap-GAP domain-containing protein DDB_G0271806 from Dictyostelium discoideum (Social amoeba).